The sequence spans 401 residues: Protein nanos (401 aa).

The disordered stretch occupies residues 181–207; it reads LGRMSYGSAPPQVQMPPQQQHQQQQGL. A compositionally biased stretch (low complexity) spans 190–205; the sequence is PPQVQMPPQQQHQQQQ. Residues 318–372 form a Nanos-type zinc finger; sequence HCVFCENNNEPEAVINSHSVRDNFNRVLCPKLRTYVCPICGASGDSAHTIKYCPK. Zn(2+)-binding residues include Cys319, Cys322, His335, Cys346, Cys354, Cys357, His365, and Cys370. 2 short sequence motifs (C2HC) span residues 319–346 and 354–370; these read CVFC…RVLC and CPIC…IKYC.

It belongs to the nanos family. Interacts with pum and brat. Interacts with cup. Interacts with mei-P26; possibly involved in regulation of brat levels. Interacts with wh; may be involved in mei-P26-dependent derepression of the BMP signaling pathway. Acts via the formation of a quaternary complex composed of pum, nanos, brat and the 3'-UTR mRNA of hb. Binds RNA with no specificity. Posterior part of the embryo. While the transcript is present throughout the embryo, nanos translation is controlled by smg, and the protein is found in pole plasm and pole cells. In the female ovary expressed in germline stem cells, precystoblasts and in maturing cystoblasts; in early cystoblasts expression is post-transcriptionally repressed by bam in a 3'UTR-dependent manner.

It is found in the cytoplasm. It localises to the cytoplasmic ribonucleoprotein granule. Its function is as follows. Maternal RNA-binding protein that is required for germ cells proliferation and self-renewal. Acts by forming a complex with pum and brat that regulates translation and mRNA stability. The complex binds to the Nanos Response Element (NRE), a 16 bp sequence in the hb mRNA 3'-UTR and prevents its translation. Controls posterior development. Rescuing factor for the abdominal defect of posterior group mutants. The other posterior group genes are not required for nanos function but rather play a role in localization or distribution of nanos protein. The chain is Protein nanos from Drosophila melanogaster (Fruit fly).